A 185-amino-acid chain; its full sequence is Ribosome-recycling factor (185 aa).

The protein belongs to the RRF family.

It localises to the cytoplasm. Functionally, responsible for the release of ribosomes from messenger RNA at the termination of protein biosynthesis. May increase the efficiency of translation by recycling ribosomes from one round of translation to another. The polypeptide is Ribosome-recycling factor (Pseudomonas fluorescens (strain Pf0-1)).